The primary structure comprises 592 residues: MPSRTDPKMDRSGGRVRLKAHYGGDILITSVDAMTTFKDLCEEVRDMCGLHQQHPLTLKWVDSEGDPCTVSSQMELEEAFRLVCQGRDEVLIIHVFPSIPEQPGMPCPGEDKSIYRRGARRWRKLYRANGHLFQAKRFNRGAYCGQCSERIWGLSRQGYRCINCKLLVHKRCHVLVPLTCRRHMDSVMPSQEPPVDDKNDGVDLPSEETDGIAYISSSRKHDNIKDDSEDLKPVIDGVDGIKISQGLGLQDFDLIRVIGRGSYAKVLLVRLKKNDQIYAMKVVKKELVHDDEDIDWVQTEKHVFEQASSNPFLVGLHSCFQTTSRLFLVIEYVNGGDLMFHMQRQRKLPEEHARFYAAEICIALNFLHERGIIYRDLKLDNVLLDADGHIKLTDYGMCKEGLGPGDTTSTFCGTPNYIAPEILRGEEYGFSVDWWALGVLMFEMMAGRSPFDIITDNPDMNTEDYLFQVILEKPIRIPRFLSVKASHVLKGFLNKDPKERLGCRPQTGFSDIKSHAFFRSIDWDLLEKKQTLPPFQPQITDDYGLDNFDTQFTSEPVQLTPDDEDVIKRIDQSEFEGFEYINPLLLSAEESV.

The region spanning Arg15 to Ser98 is the PB1 domain. The interaction with SQSTM1 stretch occupies residues Ala79–Gly145. Residues Gly130–Cys180 form a Phorbol-ester/DAG-type zinc finger. A Protein kinase domain is found at Phe252 to Phe518. ATP-binding positions include Ile258–Val266 and Lys281. The active-site Proton acceptor is the Asp376. The residue at position 410 (Thr410) is a Phosphothreonine; by PDPK1 and PI3K. Residues Arg519–Glu590 form the AGC-kinase C-terminal domain. At Thr560 the chain carries Phosphothreonine. At Ser591 the chain carries Phosphoserine.

This sequence belongs to the protein kinase superfamily. AGC Ser/Thr protein kinase family. PKC subfamily. Interacts directly with SQSTM1. Forms a ternary complex with SQSTM1 and KCNAB2. Forms another ternary complex with SQSTM1 and GABRR3. Forms a complex with SQSTM1 and MAP2K5. Interacts with PARD6A, PARD6B and PARD6G. Part of a complex with PARD3, PARD6A or PARD6B or PARD6G and CDC42 or RAC1. Interacts with ADAP1/CENTA1. Interacts (via the protein kinase domain) with WWC1. Forms a tripartite complex with WWC1 and DDR1, but predominantly in the absence of collagen. Interacts with PDPK1 (via N-terminal region). Interacts with WDFY2 (via WD repeats 1-3). Interacts with VAMP2. Forms a complex with WDFY2 and VAMP2. Interacts with APPL1. Interacts with WWC1, WWC2 and WWC3. Post-translationally, CDH5 is required for its phosphorylation at Thr-410. Phosphorylated by protein kinase PDPK1; phosphorylation is inhibited by the apoptotic C-terminal cleavage product of PKN2. Phosphorylation at Thr-410 by PI3K activates the kinase. Isoform 1: In brain, highly expressed in cerebellar granule neurons and cerebellar astrocytes (at protein level). Expressed at low levels in testes, lung and kidney. Isoform 2: Specifically expressed in brain where it localizes to cerebellar granule neurons (at protein level).

The protein resides in the cytoplasm. It localises to the endosome. The protein localises to the cell junction. It is found in the membrane. It catalyses the reaction L-seryl-[protein] + ATP = O-phospho-L-seryl-[protein] + ADP + H(+). The catalysed reaction is L-threonyl-[protein] + ATP = O-phospho-L-threonyl-[protein] + ADP + H(+). Atypical PKCs (PRKCI and PRKCZ) exhibit an elevated basal enzymatic activity (that may be due to the interaction with SMG1 or SQSTM1) and are not regulated by diacylglycerol, phosphatidylserine, phorbol esters or calcium ions. Two specific sites, Thr-410 (activation loop of the kinase domain) and Thr-560 (turn motif), need to be phosphorylated for its full activation. Phosphatidylinositol 3,4,5-trisphosphate might be a physiological activator. Isoform 2: Constitutively active. Functionally, calcium- and diacylglycerol-independent serine/threonine-protein kinase that functions in phosphatidylinositol 3-kinase (PI3K) pathway and mitogen-activated protein (MAP) kinase cascade, and is involved in NF-kappa-B activation, mitogenic signaling, cell proliferation, cell polarity, inflammatory response and maintenance of long-term potentiation (LTP). Upon lipopolysaccharide (LPS) treatment in macrophages, or following mitogenic stimuli, functions downstream of PI3K to activate MAP2K1/MEK1-MAPK1/ERK2 signaling cascade independently of RAF1 activation. Required for insulin-dependent activation of AKT3, but may function as an adapter rather than a direct activator. Upon insulin treatment may act as a downstream effector of PI3K and contribute to the activation of translocation of the glucose transporter SLC2A4/GLUT4 and subsequent glucose transport in adipocytes. In EGF-induced cells, binds and activates MAP2K5/MEK5-MAPK7/ERK5 independently of its kinase activity and can activate JUN promoter through MEF2C. Through binding with SQSTM1/p62, functions in interleukin-1 signaling and activation of NF-kappa-B with the specific adapters RIPK1 and TRAF6. Participates in TNF-dependent transactivation of NF-kappa-B by phosphorylating and activating IKBKB kinase, which in turn leads to the degradation of NF-kappa-B inhibitors. In migrating astrocytes, forms a cytoplasmic complex with PARD6A and is recruited by CDC42 to function in the establishment of cell polarity along with the microtubule motor and dynein. In association with FEZ1, stimulates neuronal differentiation in PC12 cells. In the inflammatory response, is required for the T-helper 2 (Th2) differentiation process, including interleukin production, efficient activation of JAK1 and the subsequent phosphorylation and nuclear translocation of STAT6. May be involved in development of allergic airway inflammation (asthma), a process dependent on Th2 immune response. In the NF-kappa-B-mediated inflammatory response, can relieve SETD6-dependent repression of NF-kappa-B target genes by phosphorylating the RELA subunit at 'Ser-311'. Phosphorylates VAMP2 in vitro. Phosphorylates and activates LRRK1, which phosphorylates RAB proteins involved in intracellular trafficking. In terms of biological role, involved in late synaptic long term potentiation phase in CA1 hippocampal cells and long term memory maintenance. In Mus musculus (Mouse), this protein is Protein kinase C zeta type (Prkcz).